The primary structure comprises 221 residues: Glutathione S-transferase U25 (221 aa).

Position 2 is an N-acetylalanine (A2). One can recognise a GST N-terminal domain in the interval 3–82 (DEVILLDFWP…YIDEVWPSKT (80 aa)). Glutathione contacts are provided by residues 13 to 14 (SM), 39 to 40 (NK), 53 to 54 (KI), and 66 to 67 (ES). The 121-residue stretch at 88-208 (DPYQRAQAKF…LPDSEKIIKF (121 aa)) folds into the GST C-terminal domain. Position 149 is a phosphothreonine (T149).

Belongs to the GST superfamily. Tau family.

The protein resides in the cytoplasm. The protein localises to the cytosol. It carries out the reaction RX + glutathione = an S-substituted glutathione + a halide anion + H(+). In terms of biological role, may be involved in the conjugation of reduced glutathione to a wide number of exogenous and endogenous hydrophobic electrophiles and have a detoxification role against certain herbicides. In Arabidopsis thaliana (Mouse-ear cress), this protein is Glutathione S-transferase U25 (GSTU25).